We begin with the raw amino-acid sequence, 400 residues long: Acetylornithine aminotransferase (400 aa).

Residues 106–107 and F132 contribute to the pyridoxal 5'-phosphate site; that span reads GA. R135 is a binding site for N(2)-acetyl-L-ornithine. Residue 217–220 participates in pyridoxal 5'-phosphate binding; the sequence is DEVQ. K246 is subject to N6-(pyridoxal phosphate)lysine. S274 is a N(2)-acetyl-L-ornithine binding site. T275 provides a ligand contact to pyridoxal 5'-phosphate.

It belongs to the class-III pyridoxal-phosphate-dependent aminotransferase family. ArgD subfamily. As to quaternary structure, homodimer. Requires pyridoxal 5'-phosphate as cofactor.

The protein resides in the cytoplasm. It carries out the reaction N(2)-acetyl-L-ornithine + 2-oxoglutarate = N-acetyl-L-glutamate 5-semialdehyde + L-glutamate. It functions in the pathway amino-acid biosynthesis; L-arginine biosynthesis; N(2)-acetyl-L-ornithine from L-glutamate: step 4/4. This Streptomyces clavuligerus protein is Acetylornithine aminotransferase.